Reading from the N-terminus, the 464-residue chain is UDP-N-acetylmuramate--L-alanine ligase (464 aa).

ATP is bound at residue 112 to 118; sequence GTHGKTT.

The protein belongs to the MurCDEF family.

The protein localises to the cytoplasm. The enzyme catalyses UDP-N-acetyl-alpha-D-muramate + L-alanine + ATP = UDP-N-acetyl-alpha-D-muramoyl-L-alanine + ADP + phosphate + H(+). The protein operates within cell wall biogenesis; peptidoglycan biosynthesis. Cell wall formation. In Chromobacterium violaceum (strain ATCC 12472 / DSM 30191 / JCM 1249 / CCUG 213 / NBRC 12614 / NCIMB 9131 / NCTC 9757 / MK), this protein is UDP-N-acetylmuramate--L-alanine ligase.